The chain runs to 212 residues: Interleukin-6 (212 aa).

The signal sequence occupies residues 1 to 29 (MNSFSTSAFGPVAFSLGLLLVLPAAFPAP). Cysteines 72 and 78 form a disulfide. N-linked (GlcNAc...) asparagine glycosylation is present at Asn-73. Residue Ser-81 is modified to Phosphoserine; by FAM20C. The cysteines at positions 101 and 111 are disulfide-linked.

The protein belongs to the IL-6 superfamily. In terms of assembly, component of a hexamer of two molecules each of IL6, IL6R and IL6ST; first binds to IL6R to associate with the signaling subunit IL6ST. Interacts with IL6R (via the N-terminal ectodomain); this interaction may be affected by IL6R-binding with SORL1, hence decreasing IL6 cis signaling. Interacts with SORL1 (via the N-terminal ectodomain); this interaction leads to IL6 internalization and lysosomal degradation. May form a trimeric complex with the soluble SORL1 ectodomain and soluble IL6R receptor; this interaction might stabilize circulating IL6, hence promoting IL6 trans signaling. N- and O-glycosylated. Produced by skeletal muscle.

The protein localises to the secreted. Its function is as follows. Cytokine with a wide variety of biological functions in immunity, tissue regeneration, and metabolism. Binds to IL6R, then the complex associates to the signaling subunit IL6ST/gp130 to trigger the intracellular IL6-signaling pathway. The interaction with the membrane-bound IL6R and IL6ST stimulates 'classic signaling', whereas the binding of IL6 and soluble IL6R to IL6ST stimulates 'trans-signaling'. Alternatively, 'cluster signaling' occurs when membrane-bound IL6:IL6R complexes on transmitter cells activate IL6ST receptors on neighboring receiver cells. In terms of biological role, IL6 is a potent inducer of the acute phase response. Rapid production of IL6 contributes to host defense during infection and tissue injury, but excessive IL6 synthesis is involved in disease pathology. In the innate immune response, is synthesized by myeloid cells, such as macrophages and dendritic cells, upon recognition of pathogens through toll-like receptors (TLRs) at the site of infection or tissue injury. In the adaptive immune response, is required for the differentiation of B cells into immunoglobulin-secreting cells. Plays a major role in the differentiation of CD4(+) T cell subsets. Essential factor for the development of T follicular helper (Tfh) cells that are required for the induction of germinal-center formation. Required to drive naive CD4(+) T cells to the Th17 lineage. Also required for proliferation of myeloma cells and the survival of plasmablast cells. Acts as an essential factor in bone homeostasis and on vessels directly or indirectly by induction of VEGF, resulting in increased angiogenesis activity and vascular permeability. Induces, through 'trans-signaling' and synergistically with IL1B and TNF, the production of VEGF. Involved in metabolic controls, is discharged into the bloodstream after muscle contraction increasing lipolysis and improving insulin resistance. 'Trans-signaling' in central nervous system also regulates energy and glucose homeostasis. Mediates, through GLP-1, crosstalk between insulin-sensitive tissues, intestinal L cells and pancreatic islets to adapt to changes in insulin demand. Also acts as a myokine. Plays a protective role during liver injury, being required for maintenance of tissue regeneration. Also has a pivotal role in iron metabolism by regulating HAMP/hepcidin expression upon inflammation or bacterial infection. Through activation of IL6ST-YAP-NOTCH pathway, induces inflammation-induced epithelial regeneration. The polypeptide is Interleukin-6 (Homo sapiens (Human)).